The chain runs to 34 residues: Cytochrome c oxidase subunit 6B (34 aa).

It belongs to the cytochrome c oxidase subunit 6B family. As to quaternary structure, component of the cytochrome c oxidase (complex IV, CIV), a multisubunit enzyme composed of 14 subunits. The complex is composed of a catalytic core of 3 subunits MT-CO1, MT-CO2 and MT-CO3, encoded in the mitochondrial DNA, and 11 supernumerary subunits COX4I, COX5A, COX5B, COX6A, COX6B, COX6C, COX7A, COX7B, COX7C, COX8 and NDUFA4, which are encoded in the nuclear genome. The complex exists as a monomer or a dimer and forms supercomplexes (SCs) in the inner mitochondrial membrane with NADH-ubiquinone oxidoreductase (complex I, CI) and ubiquinol-cytochrome c oxidoreductase (cytochrome b-c1 complex, complex III, CIII), resulting in different assemblies (supercomplex SCI(1)III(2)IV(1) and megacomplex MCI(2)III(2)IV(2)). The N-terminus is blocked.

It localises to the mitochondrion inner membrane. It functions in the pathway energy metabolism; oxidative phosphorylation. Functionally, component of the cytochrome c oxidase, the last enzyme in the mitochondrial electron transport chain which drives oxidative phosphorylation. The respiratory chain contains 3 multisubunit complexes succinate dehydrogenase (complex II, CII), ubiquinol-cytochrome c oxidoreductase (cytochrome b-c1 complex, complex III, CIII) and cytochrome c oxidase (complex IV, CIV), that cooperate to transfer electrons derived from NADH and succinate to molecular oxygen, creating an electrochemical gradient over the inner membrane that drives transmembrane transport and the ATP synthase. Cytochrome c oxidase is the component of the respiratory chain that catalyzes the reduction of oxygen to water. Electrons originating from reduced cytochrome c in the intermembrane space (IMS) are transferred via the dinuclear copper A center (CU(A)) of subunit 2 and heme A of subunit 1 to the active site in subunit 1, a binuclear center (BNC) formed by heme A3 and copper B (CU(B)). The BNC reduces molecular oxygen to 2 water molecules using 4 electrons from cytochrome c in the IMS and 4 protons from the mitochondrial matrix. The chain is Cytochrome c oxidase subunit 6B from Thunnus obesus (Bigeye tuna).